The primary structure comprises 338 residues: MFQAFPGDYDSGSRCSSSPSAESQYLSSVDSFGSPPTAAASQECAGLGEMPGSFVPTVTAITTSQDLQWLVQPTLISSMAQSQGQPLASQPPAVDPYDMPGTSYSTPGLSAYSTGGASGSGGPSTSTSTSGPVSARPARARPRRPREETLTPEEEEKRRVRRERNKLAAAKCRNRRRELTDRLQAETDQLEEEKAELESEIAELQKEKERLEFVLVAHKPGCKIPYEEGPGPGPLAEVRDLPGSTSAKEDGFGWLLPPPPPPPLPFQSSRDAPPNLTASLFTHSEVQVLGDPFPVVSPSYTSSFVLTCPEVSAFAGSQRTSGSEQPSDPLNSPSLLAL.

2 disordered regions span residues 1 to 54 and 80 to 179; these read MFQA…PGSF and AQSQ…RREL. Residues 13–31 are compositionally biased toward polar residues; it reads SRCSSSPSAESQYLSSVDS. The residue at position 27 (serine 27) is a Phosphoserine. Over residues 123–137 the composition is skewed to low complexity; the sequence is PSTSTSTSGPVSARP. The region spanning 155–218 is the bZIP domain; that stretch reads EEKRRVRRER…ERLEFVLVAH (64 aa). The segment at 157–182 is basic motif; the sequence is KRRVRRERNKLAAAKCRNRRRELTDR. Residues 183–211 are leucine-zipper; that stretch reads LQAETDQLEEEKAELESEIAELQKEKERL. 2 disordered regions span residues 222-276 and 315-338; these read CKIP…PPNL and AGSQRTSGSEQPSDPLNSPSLLAL. The span at 256 to 265 shows a compositional bias: pro residues; sequence LPPPPPPPLP. A compositionally biased stretch (polar residues) spans 266-276; that stretch reads FQSSRDAPPNL.

It belongs to the bZIP family. Fos subfamily. As to quaternary structure, heterodimer; binds to DNA as heterodimer. Component of an AP-1 transcription factor complex; composed of FOS-JUN heterodimers. As part of the AP-1 transcription factor complex, forms heterodimers with JUN, JUNB or JUND, thereby binding to the AP-1 consensus sequence and stimulating transcription. In terms of processing, phosphorylated; phosphorylation is induced by chronic electroconvulsive seizure (ECS) treatment. In terms of tissue distribution, expressed in brain. Expressed in pyramidal cells in CA1 and CA3, in the dentate gyrus and the nucleus accumbens (at protein level).

Its subcellular location is the nucleus. In terms of biological role, heterodimerizes with proteins of the JUN family to form an AP-1 transcription factor complex, thereby enhancing their DNA binding activity to an AP-1 consensus sequence 5'-TGA[GC]TCA-3' and enhancing their transcriptional activity. Exhibits transactivation activity in vitro. As part of the AP-1 complex, facilitates enhancer selection together with cell-type-specific transcription factors by collaboratively binding to nucleosomal enhancers and recruiting the SWI/SNF (BAF) chromatin remodeling complex to establish accessible chromatin. Together with JUN, plays a role in activation-induced cell death of T cells by binding to the AP-1 promoter site of FASLG/CD95L, and inducing its transcription in response to activation of the TCR/CD3 signaling pathway. Involved in the display of nurturing behavior towards newborns. May play a role in neurogenesis in the hippocampus and in learning and memory-related tasks by regulating the expression of various genes involved in neurogenesis, depression and epilepsy. Implicated in behavioral responses related to morphine reward and spatial memory. The protein is Protein FosB of Rattus norvegicus (Rat).